Reading from the N-terminus, the 249-residue chain is DNA repair protein RecO (249 aa).

The protein belongs to the RecO family.

Functionally, involved in DNA repair and RecF pathway recombination. The chain is DNA repair protein RecO from Mycoplasma mycoides subsp. mycoides SC (strain CCUG 32753 / NCTC 10114 / PG1).